A 333-amino-acid chain; its full sequence is tRNA N6-adenosine threonylcarbamoyltransferase (333 aa).

Positions 111 and 115 each coordinate Fe cation. Residues 134 to 138 (LASGG), Asp-167, Gly-180, and Asn-273 each bind substrate. Asp-301 contributes to the Fe cation binding site.

It belongs to the KAE1 / TsaD family. Requires Fe(2+) as cofactor.

The protein localises to the cytoplasm. The enzyme catalyses L-threonylcarbamoyladenylate + adenosine(37) in tRNA = N(6)-L-threonylcarbamoyladenosine(37) in tRNA + AMP + H(+). In terms of biological role, required for the formation of a threonylcarbamoyl group on adenosine at position 37 (t(6)A37) in tRNAs that read codons beginning with adenine. Is involved in the transfer of the threonylcarbamoyl moiety of threonylcarbamoyl-AMP (TC-AMP) to the N6 group of A37, together with TsaE and TsaB. TsaD likely plays a direct catalytic role in this reaction. This Desulforapulum autotrophicum (strain ATCC 43914 / DSM 3382 / VKM B-1955 / HRM2) (Desulfobacterium autotrophicum) protein is tRNA N6-adenosine threonylcarbamoyltransferase.